A 652-amino-acid chain; its full sequence is Vacuolar fusion protein MON1 homolog A (652 aa).

Positions 102 to 141 are disordered; sequence MQRKRSSECLDGTLTPSDGQSMERAESPTPGMAQGMEPGA. Phosphoserine is present on residues Ser-128 and Ser-153. Position 158 is a phosphothreonine (Thr-158). Residues 158–185 form a disordered region; it reads TESEDGAASGDSHKEGTRGPPPLPTDMR. Phosphoserine is present on Ser-188. A disordered region spans residues 211–245; that stretch reads PGSSEDWLEPPGAVGRPATEPPREGTTEGDEEDAT.

Belongs to the MON1/SAND family. As to quaternary structure, interacts with CCZ1. Found in a complex with RMC1, CCZ1, MON1A and MON1B. The MON1A-CCZ1B complex interacts with RIMOC1. The MON1A-CCZ1B complex interacts with RAB7A and this interaction is enhanced in the presence of RIMOC1.

Its function is as follows. Plays an important role in membrane trafficking through the secretory apparatus. Not involved in endocytic trafficking to lysosomes. Acts in concert with CCZ1, as a guanine exchange factor (GEF) for RAB7, promotes the exchange of GDP to GTP, converting it from an inactive GDP-bound form into an active GTP-bound form. In Homo sapiens (Human), this protein is Vacuolar fusion protein MON1 homolog A (MON1A).